Here is a 476-residue protein sequence, read N- to C-terminus: Cytosolic Fe-S cluster assembly factor narfl (476 aa).

Residues Cys-24, Cys-71, Cys-74, Cys-77, Cys-190, Cys-246, Cys-395, and Cys-399 each coordinate [4Fe-4S] cluster.

Belongs to the NARF family. In terms of assembly, component of the CIA complex.

Component of the cytosolic iron-sulfur protein assembly (CIA) complex, a multiprotein complex that mediates the incorporation of iron-sulfur cluster into extramitochondrial Fe/S proteins. The sequence is that of Cytosolic Fe-S cluster assembly factor narfl (narfl) from Xenopus tropicalis (Western clawed frog).